A 129-amino-acid polypeptide reads, in one-letter code: Large ribosomal subunit protein eL31 (129 aa).

Residues 1 to 46 form a disordered region; that stretch reads MSQETTATKQEEQKTSELQQQKKEEQKPQQATTTTKEEKKTKPEKE. Basic and acidic residues-rich tracts occupy residues 9–27 and 35–46; these read KQEEQKTSELQQQKKEEQK and TKEEKKTKPEKE.

It belongs to the eukaryotic ribosomal protein eL31 family.

The polypeptide is Large ribosomal subunit protein eL31 (rpl31e) (Sulfolobus acidocaldarius (strain ATCC 33909 / DSM 639 / JCM 8929 / NBRC 15157 / NCIMB 11770)).